The primary structure comprises 354 residues: S-adenosylmethionine:tRNA ribosyltransferase-isomerase (354 aa).

The protein belongs to the QueA family. Monomer.

The protein localises to the cytoplasm. It catalyses the reaction 7-aminomethyl-7-carbaguanosine(34) in tRNA + S-adenosyl-L-methionine = epoxyqueuosine(34) in tRNA + adenine + L-methionine + 2 H(+). It functions in the pathway tRNA modification; tRNA-queuosine biosynthesis. Functionally, transfers and isomerizes the ribose moiety from AdoMet to the 7-aminomethyl group of 7-deazaguanine (preQ1-tRNA) to give epoxyqueuosine (oQ-tRNA). This is S-adenosylmethionine:tRNA ribosyltransferase-isomerase from Pseudomonas fluorescens (strain ATCC BAA-477 / NRRL B-23932 / Pf-5).